The following is a 443-amino-acid chain: Probable glycine dehydrogenase (decarboxylating) subunit 1 (443 aa).

The protein belongs to the GcvP family. N-terminal subunit subfamily. In terms of assembly, the glycine cleavage system is composed of four proteins: P, T, L and H. In this organism, the P 'protein' is a heterodimer of two subunits.

The enzyme catalyses N(6)-[(R)-lipoyl]-L-lysyl-[glycine-cleavage complex H protein] + glycine + H(+) = N(6)-[(R)-S(8)-aminomethyldihydrolipoyl]-L-lysyl-[glycine-cleavage complex H protein] + CO2. Its function is as follows. The glycine cleavage system catalyzes the degradation of glycine. The P protein binds the alpha-amino group of glycine through its pyridoxal phosphate cofactor; CO(2) is released and the remaining methylamine moiety is then transferred to the lipoamide cofactor of the H protein. The sequence is that of Probable glycine dehydrogenase (decarboxylating) subunit 1 from Koribacter versatilis (strain Ellin345).